The sequence spans 372 residues: Ubl carboxyl-terminal hydrolase 18 (372 aa).

Residues 19 to 45 (SSQSPADLEEKKEEDSNMKREQPRERP) form a disordered region. Positions 26 to 45 (LEEKKEEDSNMKREQPRERP) are enriched in basic and acidic residues. Residues 36-51 (MKREQPRERPRAWDYP) form a mediates interaction with IFNAR2 region. The interval 51-112 (PHGLVGLHNI…MLLLLEKMQD (62 aa)) is mediates interaction with STAT2. A USP domain is found at 55–370 (VGLHNIGQTC…TAYLLVYMKM (316 aa)). C64 serves as the catalytic Nucleophile. A mediates interaction with STAT2 and necessary for the negative regulation of the type I IFN signaling pathway region spans residues 303-312 (ELFAVIAHVG). Positions 313-372 (MADSGHYCVYIRNAVDGKWFCFNDSNICLVSWEDIQCTYGNPNYHWQETAYLLVYMKMEC) are mediates interaction with IFNAR2. Residue H318 is the Proton acceptor of the active site.

It belongs to the peptidase C19 family. In terms of assembly, interacts with STAT2; the interaction is direct. Interacts with IFNAR2; indirectly via STAT2, it negatively regulates the assembly of the ternary interferon-IFNAR1-IFNAR2 complex and inhibits type I interferon signaling. Interacts with STING1. Interacts with USP20.

It localises to the cytoplasm. It is found in the nucleus. It carries out the reaction Thiol-dependent hydrolysis of ester, thioester, amide, peptide and isopeptide bonds formed by the C-terminal Gly of ubiquitin (a 76-residue protein attached to proteins as an intracellular targeting signal).. Functionally, interferon-induced ISG15-specific protease that plays a crucial role for maintaining a proper balance of ISG15-conjugated proteins in cells. Regulates protein ISGylation by efficiently cleaving ISG15 conjugates linked via isopeptide bonds. Regulates T-cell activation and T-helper 17 (Th17) cell differentiation by deubiquitinating TAK1, likely to keep TAK1-TAB complexes in steady conditions. In turn, restricts activation of NF-kappa-B, NFAT, and JNK as well as expression of IL2 in T-cells after TCR activation. Acts as a molecular adapter with USP20 to promote innate antiviral response through deubiquitinating STING1. Involved also in the negative regulation of the inflammatory response triggered by type I interferon. Upon recruitment by STAT2 to the type I interferon receptor subunit IFNAR2 interferes with the assembly of the ternary interferon-IFNAR1-IFNAR2 complex and acts as a negative regulator of the type I interferon signaling pathway. Its function is as follows. Has enzymatic activity similar to isoform 1 and interferes with type I interferon signaling. Major deISGylation enzyme for nuclear proteins. This chain is Ubl carboxyl-terminal hydrolase 18 (USP18), found in Homo sapiens (Human).